The sequence spans 325 residues: MSLKSLLKGFKRPKKIEFNTEASTPNYGKFVAEPFERGFATTIGNSLRRTLMSSIEGAAISAIRIEGVNHEFSFIEGVAEDVTRIILNLKQVRIKYEPEEKDQSKIIHLELKGAGYFRAGDLAVDSSIEIMNPDLHIATLNEDANLVMDLEIQRGRGYVPAEEKKKDIEVLGTIPVDSIFSPVQKVVFEVSETRVAQRSDYEKLTLEVWTDGSVSPDDAVAQAAKILKEHLTVFINFEEELEEEDDELDEADEKLKASLSKHVEELELSVRSLNVLRSLEIDFIGDLVKRSEEEMSKSKHYSDQCLQELKGKLSTLGLSFGMRDF.

The tract at residues 1 to 238 (MSLKSLLKGF…EHLTVFINFE (238 aa)) is alpha N-terminal domain (alpha-NTD). Positions 254–325 (KLKASLSKHV…LGLSFGMRDF (72 aa)) are alpha C-terminal domain (alpha-CTD).

The protein belongs to the RNA polymerase alpha chain family. Homodimer. The RNAP catalytic core consists of 2 alpha, 1 beta, 1 beta' and 1 omega subunit. When a sigma factor is associated with the core the holoenzyme is formed, which can initiate transcription.

The catalysed reaction is RNA(n) + a ribonucleoside 5'-triphosphate = RNA(n+1) + diphosphate. Functionally, DNA-dependent RNA polymerase catalyzes the transcription of DNA into RNA using the four ribonucleoside triphosphates as substrates. In Leptospira borgpetersenii serovar Hardjo-bovis (strain JB197), this protein is DNA-directed RNA polymerase subunit alpha.